The chain runs to 714 residues: MKRSIVFIYSLVILLLSVGFIDAFKISIENHIKLSDDSSYQIGTGIYDITGPGAETNMMGYAMPGQITGGIHFRQRARAFVFIDSEGNRAVYVSTDSCMIFQEVKIQVIQDLQEIFGPTLYTHDNVLLSGTHTHSGPAGFSEYALYGITALGFYKKNFDTICDGIVQAIVKAHKSVQPARMLTQQGELWNSNINRSPYAYDNNPEEEKAMYDANVDKNMTVIRIEDMSGNPFAAISFFGVHCTSMNNTNHLISGDNKGYASYLWEKHANGQSSLPGTGPFIAAFGQSNEGDVSPNTRGPTCRDGKPCDYKTSTCNGKVEECWALGPGTDGDMFESTQIIGGNQFNKALELFNNATIQVSGKIQYRHTWKPFTNVSVEAPYNSGVEGATTCRGAMGYSFAGGTTDGPGAFNFIQGDNSTTNPFWNFIGGIIAKPTPQQTACQAPKPILIDVGMVEPIPWVPDVMPLQIITLGQIVLVAVPGEFTTMSGRRLRNTVREIIGQSIENPIVLIAGLANTYSGYIATFEEFQVQRYEGASTVFGPHTLGAYQQEFANLAQSIVDGSQADPGTFPRNMSGHTPFFLPPVIVDVAPKFDDFGDIYTDVSTTTPYSINQTVTVIFYGANLRNNFMTESSFLTVDQLQSNGQWTTILNDGDWDTKLYWKMHDLGFSLITVDWTISPITQPGTYRITHSGYAKKNPFSDNLTFYQGISSNFNVQ.

An N-terminal signal peptide occupies residues 1-23; it reads MKRSIVFIYSLVILLLSVGFIDA. Asn218 and Asn246 each carry an N-linked (GlcNAc...) asparagine glycan. The active-site Nucleophile is the Ser293. 6 N-linked (GlcNAc...) asparagine glycosylation sites follow: Asn353, Asn373, Asn416, Asn571, Asn610, and Asn700.

The protein belongs to the neutral ceramidase family.

Its subcellular location is the secreted. The catalysed reaction is an N-acylsphing-4-enine + H2O = sphing-4-enine + a fatty acid. Functionally, hydrolyzes the sphingolipid ceramide into sphingosine and free fatty acid at an optimal pH of 3.0. Has no activity toward glycosphingolipids, such as GalCer and Galbeta1-3GalNAcbeta1-4(NeuAcalpha2-3)Galbeta1-4Glcbeta1-1'Cer or sphingomyelin. The chain is Neutral ceramidase A (dcd2A) from Dictyostelium discoideum (Social amoeba).